Here is a 306-residue protein sequence, read N- to C-terminus: Homoserine kinase (306 aa).

Pro88–Thr98 contacts ATP.

This sequence belongs to the GHMP kinase family. Homoserine kinase subfamily.

It localises to the cytoplasm. It catalyses the reaction L-homoserine + ATP = O-phospho-L-homoserine + ADP + H(+). It functions in the pathway amino-acid biosynthesis; L-threonine biosynthesis; L-threonine from L-aspartate: step 4/5. In terms of biological role, catalyzes the ATP-dependent phosphorylation of L-homoserine to L-homoserine phosphate. The protein is Homoserine kinase of Synechococcus sp. (strain ATCC 27144 / PCC 6301 / SAUG 1402/1) (Anacystis nidulans).